Reading from the N-terminus, the 808-residue chain is Probable inorganic carbon transporter subunit DabA (808 aa).

C334, D336, H494, and C509 together coordinate Zn(2+).

It belongs to the inorganic carbon transporter (TC 9.A.2) DabA family. As to quaternary structure, forms a complex with DabB. Zn(2+) serves as cofactor.

The protein localises to the cell inner membrane. In terms of biological role, part of an energy-coupled inorganic carbon pump. The sequence is that of Probable inorganic carbon transporter subunit DabA from Allorhizobium ampelinum (strain ATCC BAA-846 / DSM 112012 / S4) (Agrobacterium vitis (strain S4)).